The sequence spans 692 residues: Elongation factor G (692 aa).

Positions 8–283 (NRIRNIGIAA…AVIDYLPAPT (276 aa)) constitute a tr-type G domain. GTP is bound by residues 17–24 (AHIDAGKT), 81–85 (DTPGH), and 135–138 (NKMD).

This sequence belongs to the TRAFAC class translation factor GTPase superfamily. Classic translation factor GTPase family. EF-G/EF-2 subfamily.

The protein resides in the cytoplasm. Its function is as follows. Catalyzes the GTP-dependent ribosomal translocation step during translation elongation. During this step, the ribosome changes from the pre-translocational (PRE) to the post-translocational (POST) state as the newly formed A-site-bound peptidyl-tRNA and P-site-bound deacylated tRNA move to the P and E sites, respectively. Catalyzes the coordinated movement of the two tRNA molecules, the mRNA and conformational changes in the ribosome. This Helicobacter acinonychis (strain Sheeba) protein is Elongation factor G.